The following is a 321-amino-acid chain: ATP-dependent 6-phosphofructokinase (321 aa).

Residue G11 coordinates ATP. 21-25 (RAVVR) is an ADP binding site. Residues 72 to 73 (RC) and 102 to 105 (GDGS) contribute to the ATP site. D103 contributes to the Mg(2+) binding site. 126–128 (TID) contacts substrate. D128 (proton acceptor) is an active-site residue. R155 is an ADP binding site. Substrate is bound by residues R163 and 170–172 (MGR). Residues 186 to 188 (GAE), R212, and 214 to 216 (KLH) contribute to the ADP site. Substrate-binding positions include E223, R245, and 251–254 (HIQR).

Belongs to the phosphofructokinase type A (PFKA) family. ATP-dependent PFK group I subfamily. Prokaryotic clade 'B1' sub-subfamily. In terms of assembly, homotetramer. Requires Mg(2+) as cofactor.

It is found in the cytoplasm. It carries out the reaction beta-D-fructose 6-phosphate + ATP = beta-D-fructose 1,6-bisphosphate + ADP + H(+). Its pathway is carbohydrate degradation; glycolysis; D-glyceraldehyde 3-phosphate and glycerone phosphate from D-glucose: step 3/4. Allosterically activated by ADP and other diphosphonucleosides, and allosterically inhibited by phosphoenolpyruvate. Functionally, catalyzes the phosphorylation of D-fructose 6-phosphate to fructose 1,6-bisphosphate by ATP, the first committing step of glycolysis. This is ATP-dependent 6-phosphofructokinase from Thermoanaerobacter pseudethanolicus (strain ATCC 33223 / 39E) (Clostridium thermohydrosulfuricum).